Here is a 56-residue protein sequence, read N- to C-terminus: Ovomucoid (56 aa).

The region spanning 6 to 56 (VDCSEYPKPDCTLEYRPLCGSDNKTYASKCNFCNAVVESNGTLTLSHFGKC) is the Kazal-like domain. Intrachain disulfides connect Cys8/Cys38, Cys16/Cys35, and Cys24/Cys56. N-linked (GlcNAc...) asparagine glycosylation is present at Asn45.

Its subcellular location is the secreted. The polypeptide is Ovomucoid (Callipepla squamata pallida (Blue scaled quail)).